Consider the following 157-residue polypeptide: uncharacterized protein (157 aa).

A signal peptide spans 1 to 17 (MSMKTKAAFHLVLFGLA). The N-palmitoyl cysteine moiety is linked to residue Cys-18. Cys-18 is lipidated: S-diacylglycerol cysteine. The next 3 membrane-spanning stretches (helical) occupy residues 42–64 (MVFD…YLYL), 98–120 (ASYI…YPLF), and 124–146 (IPFF…YVIS).

Its subcellular location is the cell membrane. This is an uncharacterized protein from Bacillus subtilis (strain 168).